The primary structure comprises 157 residues: Protein Smg homolog (157 aa).

The protein belongs to the Smg family.

This is Protein Smg homolog from Shewanella putrefaciens (strain CN-32 / ATCC BAA-453).